Reading from the N-terminus, the 160-residue chain is Serine-protein kinase RsbW (160 aa).

Belongs to the anti-sigma-factor family.

It catalyses the reaction L-seryl-[protein] + ATP = O-phospho-L-seryl-[protein] + ADP + H(+). The catalysed reaction is L-threonyl-[protein] + ATP = O-phospho-L-threonyl-[protein] + ADP + H(+). In terms of biological role, negative regulator of sigma-B activity. Phosphorylates and inactivates its specific antagonist protein, RsbV. Upon phosphorylation of RsbV, RsbW is released and binds to sigma-B, thereby blocking its ability to form an RNA polymerase holoenzyme (E-sigma-B). This is Serine-protein kinase RsbW from Bacillus cereus (strain AH187).